A 573-amino-acid chain; its full sequence is Protein FAM227B (573 aa).

Positions 429–485 (DNKKDFKRVKQRIKDDIKFLKEQQEQIDKELDRLQAKASKNLQEVKNDFENFLHKLR) form a coiled coil. Residues 497–521 (SASPSESLQSLQSPNSSLSSPAMSE) are compositionally biased toward low complexity. The interval 497–528 (SASPSESLQSLQSPNSSLSSPAMSEDFNSVEE) is disordered.

The protein belongs to the FAM227 family.

The polypeptide is Protein FAM227B (Fam227b) (Rattus norvegicus (Rat)).